The primary structure comprises 533 residues: Adenosine deaminase (533 aa).

The first 19 residues, Met1–Pro19, serve as a signal peptide directing secretion.

The protein belongs to the metallo-dependent hydrolases superfamily. Adenosine and AMP deaminases family. ADGF subfamily. It depends on Zn(2+) as a cofactor. In terms of processing, proteolytically cleaved by human mast cell tryptase and chymase. Female salivary gland (at protein level).

The protein localises to the secreted. It catalyses the reaction adenosine + H2O + H(+) = inosine + NH4(+). It carries out the reaction 2'-deoxyadenosine + H2O + H(+) = 2'-deoxyinosine + NH4(+). In terms of biological role, catalyzes the deamination of adenosine to inosine and deoxyadenosine to deoxyinosine. Induces degranulation of host mast cells, and secretion of tryptase and IL6. Modulates enzymatic activities of human tryptase and chymase. Induces release of cytokines, such as IL1B, IL6, TNF, CCL2, IFN-beta (INFB1) and ISG15, from host monocytes and macrophages. Activates host NF-kappa-B signaling pathway in TAK1/MAP3K7-dependent manner. Functionally, (Microbial infection) Promotes replication of dengue virus type 2 in host cells probably via modulation of cytokine production in host macrophages and monocytes. This Aedes albopictus (Asian tiger mosquito) protein is Adenosine deaminase.